A 234-amino-acid chain; its full sequence is MKVLANFEDNHKIPTNSGIDNLLDGGVEKGTVTQIFGPPGSGKSNISLVLAVNVAKQGKKVVYVDTEGGISINRIKQIAGEDFPKIVNNIIVFEPTSFLEQNENLKTIELWIRKHHDDVDLCVLDSAVALYRVDDMKSSRLNKELGKQMGILAKIARNYDVAVVLTNQIYSSFDDDNKDVVKAVGGTILQYWSKTIIQLERNDEFNKRVATLKRHRSIGEGKQATFKIVERGII.

Belongs to the eukaryotic RecA-like protein family. RadB subfamily.

Involved in DNA repair and in homologous recombination. May regulate the cleavage reactions of the branch-structured DNA. Has a very weak ATPase activity that is not stimulated by DNA. Binds DNA but does not promote DNA strands exchange. This is DNA repair and recombination protein RadB from Methanobrevibacter smithii (strain ATCC 35061 / DSM 861 / OCM 144 / PS).